The sequence spans 111 residues: UPF0339 protein ACIAD0721 (111 aa).

2 consecutive repeat copies span residues 10–58 and 61–109. The tract at residues 89 to 111 is disordered; the sequence is SRDKGIESVKNNGTTATVKDLTG.

It belongs to the UPF0339 family. Duplicated subfamily.

This Acinetobacter baylyi (strain ATCC 33305 / BD413 / ADP1) protein is UPF0339 protein ACIAD0721.